The sequence spans 620 residues: Chaperone protein HscA homolog (620 aa).

Belongs to the heat shock protein 70 family.

In terms of biological role, chaperone involved in the maturation of iron-sulfur cluster-containing proteins. Has a low intrinsic ATPase activity which is markedly stimulated by HscB. This is Chaperone protein HscA homolog from Janthinobacterium sp. (strain Marseille) (Minibacterium massiliensis).